The following is a 142-amino-acid chain: ATP synthase epsilon chain (142 aa).

Belongs to the ATPase epsilon chain family. As to quaternary structure, F-type ATPases have 2 components, CF(1) - the catalytic core - and CF(0) - the membrane proton channel. CF(1) has five subunits: alpha(3), beta(3), gamma(1), delta(1), epsilon(1). CF(0) has three main subunits: a, b and c.

The protein resides in the cell inner membrane. Its function is as follows. Produces ATP from ADP in the presence of a proton gradient across the membrane. The polypeptide is ATP synthase epsilon chain (Shewanella piezotolerans (strain WP3 / JCM 13877)).